The chain runs to 602 residues: Glutamyl-tRNA(Gln) amidotransferase subunit B, mitochondrial (602 aa).

Residues 1 to 56 (MFRSCLRHCRRATVRSRTCPRCSHHEIPQLQVVQRQISLSSSFPHIRRLQTSSTDT) constitute a mitochondrion transit peptide.

It belongs to the GatB/GatE family. GatB subfamily. As to quaternary structure, subunit of the heterotrimeric GatCAB amidotransferase (AdT) complex, composed of A, B and C subunits.

It is found in the mitochondrion. It catalyses the reaction L-glutamyl-tRNA(Gln) + L-glutamine + ATP + H2O = L-glutaminyl-tRNA(Gln) + L-glutamate + ADP + phosphate + H(+). Its function is as follows. Allows the formation of correctly charged Gln-tRNA(Gln) through the transamidation of misacylated Glu-tRNA(Gln) in the mitochondria. The reaction takes place in the presence of glutamine and ATP through an activated gamma-phospho-Glu-tRNA(Gln). This chain is Glutamyl-tRNA(Gln) amidotransferase subunit B, mitochondrial (nempA), found in Emericella nidulans (strain FGSC A4 / ATCC 38163 / CBS 112.46 / NRRL 194 / M139) (Aspergillus nidulans).